The chain runs to 360 residues: 3-dehydroquinate synthase (360 aa).

Residues 71 to 76, 105 to 109, 129 to 130, Lys-142, Lys-151, and 169 to 172 each bind NAD(+); these read DGEQYK, GVVGD, TT, and TLNT. Positions 184, 248, and 265 each coordinate Zn(2+).

It belongs to the sugar phosphate cyclases superfamily. Dehydroquinate synthase family. It depends on Co(2+) as a cofactor. The cofactor is Zn(2+). Requires NAD(+) as cofactor.

Its subcellular location is the cytoplasm. It carries out the reaction 7-phospho-2-dehydro-3-deoxy-D-arabino-heptonate = 3-dehydroquinate + phosphate. It functions in the pathway metabolic intermediate biosynthesis; chorismate biosynthesis; chorismate from D-erythrose 4-phosphate and phosphoenolpyruvate: step 2/7. Functionally, catalyzes the conversion of 3-deoxy-D-arabino-heptulosonate 7-phosphate (DAHP) to dehydroquinate (DHQ). The polypeptide is 3-dehydroquinate synthase (Coxiella burnetii (strain CbuG_Q212) (Coxiella burnetii (strain Q212))).